Reading from the N-terminus, the 476-residue chain is Siroheme synthase (476 aa).

Positions 1–203 (MHYFPVFADL…RQTEAAKKEL (203 aa)) are precorrin-2 dehydrogenase /sirohydrochlorin ferrochelatase. Residues 22 to 23 (GV) and 43 to 44 (QK) each bind NAD(+). Phosphoserine is present on Ser-128. The interval 214–476 (GFVSLVGAGP…LDSLRIESVA (263 aa)) is uroporphyrinogen-III C-methyltransferase. Residue Pro-223 participates in S-adenosyl-L-methionine binding. Catalysis depends on Asp-246, which acts as the Proton acceptor. Lys-268 serves as the catalytic Proton donor. S-adenosyl-L-methionine contacts are provided by residues 299–301 (GGD), Val-304, 329–330 (TA), Met-381, and Gly-410.

In the N-terminal section; belongs to the precorrin-2 dehydrogenase / sirohydrochlorin ferrochelatase family. It in the C-terminal section; belongs to the precorrin methyltransferase family.

It catalyses the reaction uroporphyrinogen III + 2 S-adenosyl-L-methionine = precorrin-2 + 2 S-adenosyl-L-homocysteine + H(+). The enzyme catalyses precorrin-2 + NAD(+) = sirohydrochlorin + NADH + 2 H(+). The catalysed reaction is siroheme + 2 H(+) = sirohydrochlorin + Fe(2+). It functions in the pathway cofactor biosynthesis; adenosylcobalamin biosynthesis; precorrin-2 from uroporphyrinogen III: step 1/1. The protein operates within cofactor biosynthesis; adenosylcobalamin biosynthesis; sirohydrochlorin from precorrin-2: step 1/1. Its pathway is porphyrin-containing compound metabolism; siroheme biosynthesis; precorrin-2 from uroporphyrinogen III: step 1/1. It participates in porphyrin-containing compound metabolism; siroheme biosynthesis; siroheme from sirohydrochlorin: step 1/1. It functions in the pathway porphyrin-containing compound metabolism; siroheme biosynthesis; sirohydrochlorin from precorrin-2: step 1/1. In terms of biological role, multifunctional enzyme that catalyzes the SAM-dependent methylations of uroporphyrinogen III at position C-2 and C-7 to form precorrin-2 via precorrin-1. Then it catalyzes the NAD-dependent ring dehydrogenation of precorrin-2 to yield sirohydrochlorin. Finally, it catalyzes the ferrochelation of sirohydrochlorin to yield siroheme. This is Siroheme synthase from Actinobacillus succinogenes (strain ATCC 55618 / DSM 22257 / CCUG 43843 / 130Z).